We begin with the raw amino-acid sequence, 493 residues long: Cobyric acid synthase (493 aa).

Residues 246–440 (PIDIAVIKMP…IHGVFDGVVF (195 aa)) form the GATase cobBQ-type domain. The active-site Nucleophile is the cysteine 326. Histidine 432 is an active-site residue.

It belongs to the CobB/CobQ family. CobQ subfamily.

Its pathway is cofactor biosynthesis; adenosylcobalamin biosynthesis. In terms of biological role, catalyzes amidations at positions B, D, E, and G on adenosylcobyrinic A,C-diamide. NH(2) groups are provided by glutamine, and one molecule of ATP is hydrogenolyzed for each amidation. The sequence is that of Cobyric acid synthase from Clostridium botulinum (strain Kyoto / Type A2).